Reading from the N-terminus, the 239-residue chain is Transcription factor MYB10 (239 aa).

HTH myb-type domains follow at residues 11 to 63 (KSQV…INYL) and 64 to 118 (RPGL…KKRL). DNA-binding regions (H-T-H motif) lie at residues 39-63 (WRSL…INYL) and 91-114 (WSKI…NTHL).

In terms of tissue distribution, expressed in cauline leaves and siliques.

The protein localises to the nucleus. Functionally, involved in metal ions homeostasis, including iron ions (Fe) acquisition, via the regulation of NAS4 and NAS2 genes expression. Necessary for plant survival in alkaline soil where iron availability is greatly restricted. Triggers tolerance to nickel (Ni) and zinc (Zn) ions. The polypeptide is Transcription factor MYB10 (Arabidopsis thaliana (Mouse-ear cress)).